Here is a 214-residue protein sequence, read N- to C-terminus: Somatotropin-A (214 aa).

An N-terminal signal peptide occupies residues 1-25; that stretch reads MATGFCSSFGLLVVLLLKNVADVGA. 2 disulfide bridges follow: Cys-77-Cys-187 and Cys-204-Cys-212.

It belongs to the somatotropin/prolactin family.

It localises to the secreted. Its function is as follows. Growth hormone plays an important role in growth control. In Xenopus laevis (African clawed frog), this protein is Somatotropin-A (gh-a).